A 305-amino-acid polypeptide reads, in one-letter code: Small ribosomal subunit protein bS1B (305 aa).

S1 motif domains lie at 29–98 (GQTV…LSRR), 116–180 (GKTL…LTQR), and 194–262 (GNIY…LSTR).

Belongs to the bacterial ribosomal protein bS1 family.

In terms of biological role, binds mRNA. The chain is Small ribosomal subunit protein bS1B (rps1b) from Synechocystis sp. (strain ATCC 27184 / PCC 6803 / Kazusa).